The sequence spans 284 residues: uncharacterized protein (284 aa).

A compositionally biased stretch (polar residues) spans 1–27 (MSNLPTSTPVSPSNLAEENPKSNNPES). Disordered regions lie at residues 1 to 29 (MSNL…ESSE) and 248 to 284 (TRDS…LKKK).

This is an uncharacterized protein from Caenorhabditis elegans.